A 392-amino-acid chain; its full sequence is Xylose operon regulatory protein (392 aa).

The region spanning 288–386 (IQAMHYIRNH…DTTPKEYRDV (99 aa)) is the HTH araC/xylS-type domain. 2 DNA-binding regions (H-T-H motif) span residues 305 to 326 (DQVLDAVGISRSNLEKRFKEEV) and 353 to 376 (INEISQMCGYPSLQYFYSVFKKAY).

Functionally, regulatory protein for the xylBAFGHR operon. The protein is Xylose operon regulatory protein (xylR) of Escherichia coli O157:H7.